A 1418-amino-acid polypeptide reads, in one-letter code: MISPTHQSQYLNYFVNPVLMTESGDIIDSVTGTTTTTANMSNTTIDAPTPASTTKNYKHKKQNTNTGTSMSPSNSINSTNNNAAAAAATTTTSKKSKDIPLELTAFGTTPSGKPRLFVCQVCTRAFARLEHLRRHERSHTKEKPFSCGVCQRKFSRRDLLLRHAQKLHAGCTDAITRLRRKSIKKSQDGDDDDDDDDDDEEMANSEDENDHDESGNASTKNGKKDKKDPPPEFNLNLFNSKQKPTKANTTKSKVAKLSTTTSRKNSTNPTRKNSSSLHKQVLDQRQKAAVNTKIVSSTKIVSGTNSGVSITPTRSRRGASFSAQSGANYAINIPEFNDIYPQSDNVEFSTPQFLPSSLDNEMTWLNNIPNIPGLSDSVSAANLMRQNSITNSADHVTPPVNVSQHGSFSHQSTFSATDMGQTRSESVNSLNTPFDGSYMMPTVTISNQEIQNGVAAHHHHQQQQQHQQHNHQHQPNQSSLGLSRNDMLSEDHYGYSFYDIPENILNFPMDSISTTSNAMSSGPIQNFKPLSPITQEIEHEITPRIDGRIGDFQNNNNTNDNPIHQNINYDLNFLHTIDDIGQDVISKFMPGGYSFYGDNNVSATSSANDYNSPNNIVSPSQQNNQFALHNQSSHPSGASPHLNQAMMNKMRLHNYSSNKLFTNHIRHMINKALGKYPISGIMTPTIPSNEKLEFYLSVFIQSFLAHLPFIHPSKLNEYEIMAMTGNEDINNESARVCLPLLTATMGALLANNKNDAEHLYEASRRTIHIYLESRKTNSTNDKNYKNGKDKSSSGNPLWLLQSLMLSVLYGLFSDNENNVYIVIRQLNALNSLVKTSIKNKGPIFFSNNGEDEELYNKLNSHDNGTSLFSNNLNDEMRYKNNINMQSQTRIVFIIYRLTNFLLMMYNVPLTFSINDINQLAVTSKDEETLWNFKNYQEFQEFSHKNNKTLDDYLNHKNEPIIFRELLLTVIKFGISDSNISPEIEKKVTHQLQNLCKYGFNCLVHGIYEIKQYQEMKEVDTFKVLDYLTKFYPTNDGLGFNCFRLPANKDLEKIDYALLVDFTKISSIIDLKLLKEQSWLKNYQDLTQNYHRLLDAHSTGNPLNSINDYDYLKLADCCISVLKLILFKVEDSNSNSRNRSKNDPTNEINNKLNNNNNNNNDMNNNNSNGDQLISAFDTDFGYLNMDNNGYAKKEEFSRFTDDELRYDKENTMSYFDKHIKLDIFEEVEKSSNLIQAQMLFHAFSVLSIFSVYVMRKNDNNSSPFANTDLIFELNHRYSMVLRLLERLETFLKLRYQTSAGGGGGGVNNNNNNALSIKLEQEFTNLYLYNGNVLSSDHNTNTNTTNTITTTTTTDNGTKQNQHHSQDFGLEKTLYILKMGENVLNYIYDLNLKVCVFKKLGDSLSEIRKYLIDNESTLNG.

Low complexity-rich tracts occupy residues 34–44 (TTTTANMSNTT) and 68–93 (TSMS…TTTS). The tract at residues 34–96 (TTTTANMSNT…AATTTTSKKS (63 aa)) is disordered. 2 C2H2-type zinc fingers span residues 117–139 (FVCQ…ERSH) and 145–168 (FSCG…QKLH). 5 disordered regions span residues 181–285 (KSIK…LDQR), 403–426 (SQHG…RSES), 454–484 (VAAH…GLSR), 1132–1167 (NSNS…NNSN), and 1338–1362 (TNTN…NQHH). A compositionally biased stretch (acidic residues) spans 189 to 211 (GDDDDDDDDDDEEMANSEDENDH). The segment covering 236-278 (NLFNSKQKPTKANTTKSKVAKLSTTTSRKNSTNPTRKNSSSLH) has biased composition (polar residues). 3 stretches are compositionally biased toward low complexity: residues 462–477 (QQQQ…QPNQ), 1145–1167 (NEIN…NNSN), and 1338–1356 (TNTN…DNGT).

It is found in the nucleus. In terms of biological role, transcription factor involved in the regulation of hyphal growth. This Candida albicans (strain SC5314 / ATCC MYA-2876) (Yeast) protein is Transcriptional regulator ADR1 (ADR1).